A 363-amino-acid polypeptide reads, in one-letter code: Galanin receptor 2a (363 aa).

Topologically, residues 1-23 are extracellular; that stretch reads MNASQQIHVFSSHWKVESVIISL. Residues 24-44 traverse the membrane as a helical segment; that stretch reads IFSMIFLVGTVGNCLVLAVLI. Residues 45–54 are Cytoplasmic-facing; the sequence is RNGQMNTKST. Residues 55–75 traverse the membrane as a helical segment; the sequence is NLFILNLGLADLCFIVFCVPL. At 76–94 the chain is on the extracellular side; the sequence is QATIYTMDEWVFGAFVCKA. Residues C92 and C169 are joined by a disulfide bond. Residues 95–115 traverse the membrane as a helical segment; that stretch reads VHFIIYLTMYASIFTLAAVSL. The Cytoplasmic portion of the chain corresponds to 116 to 135; it reads DRYLAIRYPLRSRETRTPRN. Residues 136–156 traverse the membrane as a helical segment; the sequence is ALTSISLVWALSLFFSSPYLS. Residues 157–179 lie on the Extracellular side of the membrane; it reads YYQQMDLDGTTVCIPAWSVHHRQ. Residues 180 to 200 form a helical membrane-spanning segment; sequence AMDICTFIFGYLIPVLILGIT. Residues 201-230 lie on the Cytoplasmic side of the membrane; the sequence is YARTIRYLWTSVDPMQDMSESRKAKRKVTK. The chain crosses the membrane as a helical span at residues 231–251; sequence MIIIVAVLFCLCWLPHHLVIL. The Extracellular portion of the chain corresponds to 252 to 268; the sequence is CMWFGHFPLNHTTYVLR. Residues 269-289 traverse the membrane as a helical segment; sequence ILSHLVAYANSCLNPIVYALV. At 290–363 the chain is on the cytoplasmic side; that stretch reads SKHFRKGFKK…TSAFMTFNVT (74 aa).

This sequence belongs to the G-protein coupled receptor 1 family. Expressed in neurons in the ventral area of the interpeduncular nucleus (IPN) where expression often overlaps with spx1.

It is found in the membrane. Functionally, receptor for the hormone galanin. Receptor for the hormones spexin-1 and spexin-2. The chain is Galanin receptor 2a from Danio rerio (Zebrafish).